The chain runs to 124 residues: Large ribosomal subunit protein bL17 (124 aa).

The protein belongs to the bacterial ribosomal protein bL17 family. In terms of assembly, part of the 50S ribosomal subunit. Contacts protein L32.

The sequence is that of Large ribosomal subunit protein bL17 from Mycoplasma pneumoniae (strain ATCC 29342 / M129 / Subtype 1) (Mycoplasmoides pneumoniae).